A 490-amino-acid chain; its full sequence is Cheilanthifoline synthase (490 aa).

Residues glutamate 2–leucine 22 form a helical membrane-spanning segment. Cysteine 432 lines the heme pocket.

The protein belongs to the cytochrome P450 family. Requires heme as cofactor. In terms of tissue distribution, expressed in roots. Detected in leaves and stems.

The protein resides in the endoplasmic reticulum membrane. The catalysed reaction is (S)-scoulerine + reduced [NADPH--hemoprotein reductase] + O2 = (S)-cheilanthifoline + oxidized [NADPH--hemoprotein reductase] + 2 H2O + H(+). The protein operates within alkaloid biosynthesis. In terms of biological role, methylenedioxy bridge-forming cytochrome P450 involved in the biosynthesis of isoquinoline alkaloids. Converts (S)-scoulerine into (R,S)-cheilanthifoline. Catalyzes an oxidative reaction that does not incorporate oxygen into the product. The sequence is that of Cheilanthifoline synthase (CYP719A5) from Eschscholzia californica (California poppy).